Reading from the N-terminus, the 500-residue chain is Glycerol kinase (500 aa).

An ADP-binding site is contributed by Thr13. Positions 13, 14, and 15 each coordinate ATP. Sn-glycerol 3-phosphate is bound at residue Thr13. Arg17 is a binding site for ADP. Residues Arg83, Glu84, Tyr135, and Asp244 each contribute to the sn-glycerol 3-phosphate site. Positions 83, 84, 135, 244, and 245 each coordinate glycerol. 2 residues coordinate ADP: Thr266 and Gly309. ATP contacts are provided by Thr266, Gly309, Gln313, and Gly410. ADP contacts are provided by Gly410 and Asn414.

It belongs to the FGGY kinase family.

The catalysed reaction is glycerol + ATP = sn-glycerol 3-phosphate + ADP + H(+). It participates in polyol metabolism; glycerol degradation via glycerol kinase pathway; sn-glycerol 3-phosphate from glycerol: step 1/1. With respect to regulation, inhibited by fructose 1,6-bisphosphate (FBP). Functionally, key enzyme in the regulation of glycerol uptake and metabolism. Catalyzes the phosphorylation of glycerol to yield sn-glycerol 3-phosphate. This Burkholderia multivorans (strain ATCC 17616 / 249) protein is Glycerol kinase.